A 96-amino-acid polypeptide reads, in one-letter code: Ribonuclease P protein component 1 (96 aa).

The protein belongs to the eukaryotic/archaeal RNase P protein component 1 family. Consists of a catalytic RNA component and at least 5 protein subunits.

The protein resides in the cytoplasm. The catalysed reaction is Endonucleolytic cleavage of RNA, removing 5'-extranucleotides from tRNA precursor.. In terms of biological role, part of ribonuclease P, a protein complex that generates mature tRNA molecules by cleaving their 5'-ends. This Methanococcus maripaludis (strain DSM 14266 / JCM 13030 / NBRC 101832 / S2 / LL) protein is Ribonuclease P protein component 1.